The sequence spans 508 residues: Aromatase (508 aa).

Cysteine 437 provides a ligand contact to heme.

It belongs to the cytochrome P450 family. Heme serves as cofactor.

The protein resides in the membrane. The catalysed reaction is testosterone + 3 reduced [NADPH--hemoprotein reductase] + 3 O2 = 17beta-estradiol + formate + 3 oxidized [NADPH--hemoprotein reductase] + 4 H2O + 4 H(+). It carries out the reaction androst-4-ene-3,17-dione + 3 reduced [NADPH--hemoprotein reductase] + 3 O2 = estrone + formate + 3 oxidized [NADPH--hemoprotein reductase] + 4 H2O + 4 H(+). In terms of biological role, catalyzes the formation of aromatic C18 estrogens from C19 androgens. This is Aromatase (Cyp19a1) from Rattus norvegicus (Rat).